The chain runs to 321 residues: 5,10-methylenetetrahydromethanopterin reductase (321 aa).

It belongs to the mer family.

It localises to the cytoplasm. It catalyses the reaction 5-methyl-5,6,7,8-tetrahydromethanopterin + oxidized coenzyme F420-(gamma-L-Glu)(n) + H(+) = 5,10-methylenetetrahydromethanopterin + reduced coenzyme F420-(gamma-L-Glu)(n). It participates in one-carbon metabolism; methanogenesis from CO(2); methyl-coenzyme M from 5,10-methylene-5,6,7,8-tetrahydromethanopterin: step 1/2. Its function is as follows. Catalyzes the reversible reduction of methylene-H(4)MPT to methyl-H(4)MPT. In Methanothermobacter thermautotrophicus (strain ATCC 29096 / DSM 1053 / JCM 10044 / NBRC 100330 / Delta H) (Methanobacterium thermoautotrophicum), this protein is 5,10-methylenetetrahydromethanopterin reductase.